Here is a 699-residue protein sequence, read N- to C-terminus: Endogenous retrovirus group K member 113 Env polyprotein (699 aa).

Residues 1–47 (MNPSEMQRKAPPRRRRHRNRAPLTHKMNKMVTSEEQMKLPSTKKAEP) are disordered. Residues 1-89 (MNPSEMQRKA…ALMIVSMVVS (89 aa)) form the signal peptide. The span at 10–20 (APPRRRRHRNR) shows a compositional bias: basic residues. Residues 90–632 (LPMPAGAAAA…NLNPVTWVKT (543 aa)) lie on the Extracellular side of the membrane. Asparagine 100, asparagine 128, asparagine 153, asparagine 274, asparagine 355, asparagine 372, and asparagine 461 each carry an N-linked (GlcNAc...) asparagine glycan. Residues 466-486 (FIFTLIAVIMGLIAVTATAAV) are fusion peptide. N-linked (GlcNAc...) asparagine glycans are attached at residues asparagine 507, asparagine 554, asparagine 566, and asparagine 585. A helical membrane pass occupies residues 633–653 (IGSTTIINLILILVCLFCLLL). At 654–699 (VCRCTQQLRRDSDHRERAMMTMAVLSKRKGGNVGKSKRDQIVTVSV) the chain is on the cytoplasmic side.

The protein belongs to the beta type-B retroviral envelope protein family. HERV class-II K(HML-2) env subfamily. In terms of assembly, the surface (SU) and transmembrane (TM) proteins form a heterodimer. SU and TM are attached by noncovalent interactions or by a labile interchain disulfide bond. In terms of processing, specific enzymatic cleavages in vivo yield the mature SU and TM proteins.

The protein localises to the cell membrane. It is found in the virion. Functionally, retroviral envelope proteins mediate receptor recognition and membrane fusion during early infection. Endogenous envelope proteins may have kept, lost or modified their original function during evolution. This endogenous envelope protein has lost its original fusogenic properties. In terms of biological role, SU mediates receptor recognition. Its function is as follows. TM anchors the envelope heterodimer to the viral membrane through one transmembrane domain. The other hydrophobic domain, called fusion peptide, mediates fusion of the viral membrane with the target cell membrane. The chain is Endogenous retrovirus group K member 113 Env polyprotein (HERVK_113) from Homo sapiens (Human).